The primary structure comprises 623 residues: MCGIVGYIGQAGDSRDYFALDVVVEGLRRLEYRGYDSAGIAIHANGEISYRKKAGKVAALDAEIAKAPLPDSILGIGHTRWATHGGPTDVNAHPHVVSNGKLAVVHNGIIENFAELRSELSAKGYNFVSDTDTEVAASLLAEIYNTQANGDLTLAMQLTGQRLEGAFTLLAIHADHDDRIVAARRNSPLVIGVGEGENFLGSDVSGFIDYTRKAVELANDQVVTITADDYAITNFDGSEAVGKPFDVEWDAAAAEKGGFGSFMEKEIHDQPAAVRDTLMGRLDEDGKLVLDELRIDEAILRSVDKIVIVACGTAAYAGQVARYAIEHWCRIPTEVELAHEFRYRDPILNEKTLVVALSQSGETMDTLMAVRHAREQGAKVVAICNTVGSTLPREADASLYTYAGPEIAVASTKAFLAQITASYLLGLYLAQLRGNKFADEVSSILDSLREMPEKIQQVIDAEEQIKKLGQDMADAKSVLFLGRHVGFPVALEGALKLKEIAYLHAEGFAAGELKHGPIALVEEGQPIFVIVPSPRGRDSLHSKVVSNIQEIRARGAVTIVIAEEGDEAVNDYANFIIRIPQAPTLMQPLLSTVPLQIFACAVATAKGYNVDQPRNLAKSVTVE.

The Nucleophile; for GATase activity role is filled by cysteine 2. A Glutamine amidotransferase type-2 domain is found at 2-228; the sequence is CGIVGYIGQA…NDQVVTITAD (227 aa). 2 consecutive SIS domains span residues 295–435 and 468–613; these read IDEA…LRGN and LGQD…VDQP. The For Fru-6P isomerization activity role is filled by lysine 618.

In terms of assembly, homodimer.

It is found in the cytoplasm. It carries out the reaction D-fructose 6-phosphate + L-glutamine = D-glucosamine 6-phosphate + L-glutamate. Catalyzes the first step in hexosamine metabolism, converting fructose-6P into glucosamine-6P using glutamine as a nitrogen source. The chain is Glutamine--fructose-6-phosphate aminotransferase [isomerizing] from Corynebacterium glutamicum (strain ATCC 13032 / DSM 20300 / JCM 1318 / BCRC 11384 / CCUG 27702 / LMG 3730 / NBRC 12168 / NCIMB 10025 / NRRL B-2784 / 534).